The following is a 445-amino-acid chain: Sporulation protein YkvU (445 aa).

12 helical membrane-spanning segments follow: residues 7-29, 39-61, 82-104, 109-131, 144-166, 172-194, 237-259, 269-291, 312-334, 349-371, 376-395, and 400-422; these read GIILLSIAAFFAECLEFVVNMIL, GLYMSILPTIFLIIVIASLELPI, AFRMTAIFTAFSTAAASIALPFI, TYHPFIKGIVIGLIPVVAFTSIA, IAIANVLKKIIQLLCLFLFFQWY, MAVLISLFVLVVSDVVVLVYLYS, VNAIEPFLVKGALLAAGVAGTAA, VAVTIGSFPAFIAHSLMVVMIPS, IFITLGYGIPAVWVMFQFAGPLT, LLWPYFLFHLFVMPLQACLIGMG, AFYHNVWSHIVALSMMYVLG, and LQMLGIILGMNTGMILLTSLHYA.

The protein localises to the forespore membrane. The polypeptide is Sporulation protein YkvU (ykvU) (Bacillus subtilis (strain 168)).